A 92-amino-acid chain; its full sequence is YcgL domain-containing protein SO_2575 (92 aa).

Positions 1–85 constitute a YcgL domain; it reads MLCAVYKSSR…PQVNLLAEHR (85 aa).

This Shewanella oneidensis (strain ATCC 700550 / JCM 31522 / CIP 106686 / LMG 19005 / NCIMB 14063 / MR-1) protein is YcgL domain-containing protein SO_2575.